The primary structure comprises 88 residues: Small ribosomal subunit protein uS15 (88 aa).

This sequence belongs to the universal ribosomal protein uS15 family. Part of the 30S ribosomal subunit. Forms a bridge to the 50S subunit in the 70S ribosome, contacting the 23S rRNA.

In terms of biological role, one of the primary rRNA binding proteins, it binds directly to 16S rRNA where it helps nucleate assembly of the platform of the 30S subunit by binding and bridging several RNA helices of the 16S rRNA. Functionally, forms an intersubunit bridge (bridge B4) with the 23S rRNA of the 50S subunit in the ribosome. The protein is Small ribosomal subunit protein uS15 of Mycoplasma mobile (strain ATCC 43663 / 163K / NCTC 11711) (Mesomycoplasma mobile).